Consider the following 468-residue polypeptide: Tissue alpha-L-fucosidase (468 aa).

A signal peptide spans 1–29; sequence MRAPGERWRPAGAALWLLLLLLLLGATES. Position 172 is a phosphothreonine (Thr-172). Asn-243, Asn-270, and Asn-384 each carry an N-linked (GlcNAc...) asparagine glycan.

This sequence belongs to the glycosyl hydrolase 29 family. As to quaternary structure, homotetramer.

It is found in the lysosome. It carries out the reaction an alpha-L-fucoside + H2O = L-fucose + an alcohol. The catalysed reaction is a neolactoside IV(2)-alpha-Fuc-nLc4Cer(d18:1(4E)) + H2O = a neolactoside nLc4Cer(d18:1(4E)) + L-fucose. It catalyses the reaction a neolactoside IV(2)-alpha-Fuc-nLc4Cer(d18:0) + H2O = a neolactoside nLc4Cer(d18:0) + L-fucose. Alpha-L-fucosidase is responsible for hydrolyzing the alpha-1,6-linked fucose joined to the reducing-end N-acetylglucosamine of the carbohydrate moieties of glycoproteins. This chain is Tissue alpha-L-fucosidase (FUCA1), found in Macaca fascicularis (Crab-eating macaque).